A 207-amino-acid chain; its full sequence is uncharacterized protein (207 aa).

Active-site charge relay system residues include S119 and H160.

This sequence belongs to the peptidase S51 family.

This is an uncharacterized protein from Pasteurella multocida (strain Pm70).